The chain runs to 644 residues: Zinc transporter ZIP4 (644 aa).

The first 27 residues, 1–27, serve as a signal peptide directing secretion; it reads MAILAWLEPRPLLAVLVLVLTMRMAQP. At 28–323 the chain is on the extracellular side; that stretch reads AHLLTLLSSG…QNQLSQAEKY (296 aa). Disulfide bonds link cysteine 59–cysteine 64, cysteine 67–cysteine 103, and cysteine 153–cysteine 188. The disordered stretch occupies residues 231-259; that stretch reads TETHSDHHHQEKRVNRQGPTPLTAPNSSS. Basic and acidic residues predominate over residues 233 to 244; sequence THSDHHHQEKRV. A compositionally biased stretch (polar residues) spans 247–259; it reads QGPTPLTAPNSSS. Cysteines 266 and 305 form a disulfide. Residues 324–344 form a helical membrane-spanning segment; that stretch reads LYGSLATLLICLCSTFGLLLL. Residues 345-355 are Cytoplasmic-facing; the sequence is TCAACSTAAHY. Residues 356–376 form a helical membrane-spanning segment; sequence VIQTFLGMAVGALTGDALLHL. Residues 377–404 lie on the Extracellular side of the membrane; sequence TPKVLGLHQHGGDSEHRADSHGPQTTWR. The chain crosses the membrane as a helical span at residues 405–425; that stretch reads LVVALSGLYVFFLFEKLCDLL. Over 426–495 the chain is Cytoplasmic; the sequence is LPQDPEDRKG…KSPELRLLPY (70 aa). Residues 449-451 carry the Essential for SLC39A4 endocytosis motif; that stretch reads LQL. A compositionally biased stretch (basic and acidic residues) spans 456–467; it reads LRPPKQPHEGSR. Positions 456-484 are disordered; that stretch reads LRPPKQPHEGSRADLVAEESPELLSPEPR. Residues 496 to 515 traverse the membrane as a helical segment; that stretch reads MITLGDGLHNFADGLAVGAA. The Zn(2+) site is built by histidine 504, asparagine 505, and aspartate 508. Residues 516–523 lie on the Extracellular side of the membrane; sequence FASSWKTG. The helical transmembrane segment at 524-550 threads the bilayer; it reads LATSLAVFCHEVPHELGDFAALLHAGL. Histidine 533, glutamate 534, and histidine 537 together coordinate Zn(2+). Residues 551–555 lie on the Cytoplasmic side of the membrane; sequence PVSRA. Residues 556–576 traverse the membrane as a helical segment; the sequence is LLLNLASGLTAFAGLYVALAL. Topologically, residues 577 to 583 are extracellular; it reads GVGEESE. Residues 584-604 form a helical membrane-spanning segment; the sequence is SWTLAVAIGLFLYVALCDMLP. Topologically, residues 605-614 are cytoplasmic; sequence AMLNVRDPRP. Residues 615–635 traverse the membrane as a helical segment; the sequence is WLLFLLHNVGLLGGWAVLLLL. At 636–644 the chain is on the extracellular side; that stretch reads SLYEDSIAL.

This sequence belongs to the ZIP transporter (TC 2.A.5) family. Homodimer. In terms of processing, the extracellular N-terminal ectodomain is cleaved when cells are Zn(2+) deficient, N-terminally cleaved SLC39A4 is internalized at a faster rate. Under excess Zn(2+) conditions, SLC39A4 on the cell surface is rapidly endocytosed, ubiquitinated and degraded. Post-translationally, glycosylated.

It localises to the cell membrane. It is found in the recycling endosome membrane. The protein localises to the apical cell membrane. The catalysed reaction is Zn(2+)(in) = Zn(2+)(out). Functionally, selective transporter that mediates the uptake of Zn(2+). Plays an essential role for dietary zinc uptake from small intestine. The Zn(2+) uniporter activity is regulated by zinc availability. Also exhibits polyspecific binding and transport of Cu(2+), Cd(2+) and possibly Ni(2+) but at higher concentrations. This chain is Zinc transporter ZIP4, found in Pteropus alecto (Black flying fox).